A 205-amino-acid chain; its full sequence is High frequency lysogenization protein HflD homolog (205 aa).

This sequence belongs to the HflD family.

It is found in the cytoplasm. The protein resides in the cell inner membrane. This is High frequency lysogenization protein HflD homolog from Photobacterium profundum (strain SS9).